The chain runs to 299 residues: Taste receptor type 2 member 5 (299 aa).

Met-1 is a topological domain (extracellular). The chain crosses the membrane as a helical span at residues 2 to 22 (LSAGLGLLMLVAVVEFLIGLI). The Cytoplasmic portion of the chain corresponds to 23 to 45 (GNGVLVVWSFREWMRKFNWSSYN). A helical membrane pass occupies residues 46-66 (LIILGLAGCRFLLQWLIILDL). Over 67–82 (SLFPLFQSSRWLRYLS) the chain is Extracellular. A helical transmembrane segment spans residues 83–103 (IFWVLVSQASLWFATFLSVFY). Residues 104-127 (CKKITTFDRPAYLWLKQRAYNLSL) are Cytoplasmic-facing. A helical membrane pass occupies residues 128-148 (WCLLGYFIINLLLTVQIGLMF). At 149–175 (YHPPQGNSSIRYPFESWQYLYAFRLNS) the chain is on the extracellular side. Asn-155 is a glycosylation site (N-linked (GlcNAc...) asparagine). Residues 176–196 (GSYLPLMVFLVSSGMLIVSLY) traverse the membrane as a helical segment. Over 197-223 (THHKKMKVHSAGRRDVRAKAHITALKS) the chain is Cytoplasmic. Residues 224-244 (LGCFLFLHLVYIMASPFSITS) form a helical membrane-spanning segment. The Extracellular portion of the chain corresponds to 245–253 (KTYPPDLTS). Residues 254–274 (VFIWETLMAAYPSLHSLILIM) traverse the membrane as a helical segment. Residues 275 to 299 (GIPRVKQTCQKILWKTVCARRCWGP) are Cytoplasmic-facing.

Belongs to the G-protein coupled receptor T2R family.

It is found in the membrane. Receptor that may play a role in the perception of bitterness and is gustducin-linked. May play a role in sensing the chemical composition of the gastrointestinal content. The activity of this receptor may stimulate alpha gustducin, mediate PLC-beta-2 activation and lead to the gating of TRPM5. The sequence is that of Taste receptor type 2 member 5 (TAS2R5) from Gorilla gorilla gorilla (Western lowland gorilla).